The following is a 429-amino-acid chain: 3-phosphoshikimate 1-carboxyvinyltransferase (429 aa).

Residues K23, S24, and R28 each coordinate 3-phosphoshikimate. A phosphoenolpyruvate-binding site is contributed by K23. Residues G94 and R126 each contribute to the phosphoenolpyruvate site. Positions 171, 172, 173, 199, 316, 339, and 343 each coordinate 3-phosphoshikimate. Phosphoenolpyruvate is bound at residue Q173. The active-site Proton acceptor is D316. Residues R347, R389, and K414 each contribute to the phosphoenolpyruvate site.

It belongs to the EPSP synthase family. As to quaternary structure, monomer.

The protein resides in the cytoplasm. It carries out the reaction 3-phosphoshikimate + phosphoenolpyruvate = 5-O-(1-carboxyvinyl)-3-phosphoshikimate + phosphate. It functions in the pathway metabolic intermediate biosynthesis; chorismate biosynthesis; chorismate from D-erythrose 4-phosphate and phosphoenolpyruvate: step 6/7. Its function is as follows. Catalyzes the transfer of the enolpyruvyl moiety of phosphoenolpyruvate (PEP) to the 5-hydroxyl of shikimate-3-phosphate (S3P) to produce enolpyruvyl shikimate-3-phosphate and inorganic phosphate. The chain is 3-phosphoshikimate 1-carboxyvinyltransferase from Idiomarina loihiensis (strain ATCC BAA-735 / DSM 15497 / L2-TR).